A 166-amino-acid chain; its full sequence is Large ribosomal subunit protein uL10 (166 aa).

This sequence belongs to the universal ribosomal protein uL10 family. Part of the ribosomal stalk of the 50S ribosomal subunit. The N-terminus interacts with L11 and the large rRNA to form the base of the stalk. The C-terminus forms an elongated spine to which L12 dimers bind in a sequential fashion forming a multimeric L10(L12)X complex.

Its function is as follows. Forms part of the ribosomal stalk, playing a central role in the interaction of the ribosome with GTP-bound translation factors. The sequence is that of Large ribosomal subunit protein uL10 from Shewanella denitrificans (strain OS217 / ATCC BAA-1090 / DSM 15013).